Reading from the N-terminus, the 306-residue chain is D-alanine--D-alanine ligase (306 aa).

Residues 102-300 (KHVAKAAGIP…FGEFLRWMVE (199 aa)) enclose the ATP-grasp domain. 128-183 (PMKPPYVVKPVREGSSFGVVIVKEDQSHPPQVITSSEWRYGDRVMVERYIAGRELT) is an ATP binding site. Asp252, Glu267, and Asn269 together coordinate Mg(2+).

The protein belongs to the D-alanine--D-alanine ligase family. The cofactor is Mg(2+). Requires Mn(2+) as cofactor.

It localises to the cytoplasm. It carries out the reaction 2 D-alanine + ATP = D-alanyl-D-alanine + ADP + phosphate + H(+). It participates in cell wall biogenesis; peptidoglycan biosynthesis. Its function is as follows. Cell wall formation. This Sinorhizobium fredii (strain NBRC 101917 / NGR234) protein is D-alanine--D-alanine ligase.